Reading from the N-terminus, the 850-residue chain is Receptor-like protein kinase ANXUR1 (850 aa).

Residues 1–26 form the signal peptide; the sequence is MSGKTRILFFLTCLSFLLVFPTRSNG. Residues 27–429 lie on the Extracellular side of the membrane; that stretch reads QDLALSCGTS…KKEFKNEKRH (403 aa). Residues Asn-114, Asn-132, Asn-292, Asn-302, and Asn-330 are each glycosylated (N-linked (GlcNAc...) asparagine). Residues 430–450 traverse the membrane as a helical segment; that stretch reads AFIIGSAGGVLAVLIGALCFT. The Cytoplasmic segment spans residues 451–850; it reads AYKKKQGYQG…FSQIVNPKGR (400 aa). The region spanning 517 to 790 is the Protein kinase domain; the sequence is FDDSNVIGVG…GDVLWNLEFA (274 aa). ATP is bound by residues 523 to 531 and Lys-545; that span reads IGVGGFGKV. Catalysis depends on Asp-641, which acts as the Proton acceptor. The tract at residues 796–850 is disordered; sequence TADGTRHRTPNNGGSSEDLGRGGMAVNVAGRDDVSDLSSEDNTEIFSQIVNPKGR. Over residues 839-850 the composition is skewed to polar residues; that stretch reads EIFSQIVNPKGR.

This sequence belongs to the protein kinase superfamily. Ser/Thr protein kinase family. As to expression, expressed in pollen, but not in pistils or seedlings.

It localises to the cell membrane. It carries out the reaction L-seryl-[protein] + ATP = O-phospho-L-seryl-[protein] + ADP + H(+). It catalyses the reaction L-threonyl-[protein] + ATP = O-phospho-L-threonyl-[protein] + ADP + H(+). Its function is as follows. Receptor-like protein kinase that controls pollen tube behavior by directing rupture at proper timing to release the sperm cell. This is Receptor-like protein kinase ANXUR1 (ANX1) from Arabidopsis thaliana (Mouse-ear cress).